Here is a 344-residue protein sequence, read N- to C-terminus: Holliday junction branch migration complex subunit RuvB (344 aa).

The interval 1–182 (MRIEALNTAP…FGINSRLDYY (182 aa)) is large ATPase domain (RuvB-L). ATP contacts are provided by residues Ile-21, Arg-22, Gly-63, Lys-66, Thr-67, Thr-68, 129–131 (EDY), Arg-172, Tyr-182, and Arg-219. Position 67 (Thr-67) interacts with Mg(2+). Positions 183-253 (NPELLQSIII…VARRTLESLE (71 aa)) are small ATPAse domain (RuvB-S). The tract at residues 256 to 344 (EGGLDDMDKK…GSLFDTAEDG (89 aa)) is head domain (RuvB-H). Residues Arg-311 and Arg-316 each coordinate DNA.

The protein belongs to the RuvB family. As to quaternary structure, homohexamer. Forms an RuvA(8)-RuvB(12)-Holliday junction (HJ) complex. HJ DNA is sandwiched between 2 RuvA tetramers; dsDNA enters through RuvA and exits via RuvB. An RuvB hexamer assembles on each DNA strand where it exits the tetramer. Each RuvB hexamer is contacted by two RuvA subunits (via domain III) on 2 adjacent RuvB subunits; this complex drives branch migration. In the full resolvosome a probable DNA-RuvA(4)-RuvB(12)-RuvC(2) complex forms which resolves the HJ.

The protein localises to the cytoplasm. The catalysed reaction is ATP + H2O = ADP + phosphate + H(+). Functionally, the RuvA-RuvB-RuvC complex processes Holliday junction (HJ) DNA during genetic recombination and DNA repair, while the RuvA-RuvB complex plays an important role in the rescue of blocked DNA replication forks via replication fork reversal (RFR). RuvA specifically binds to HJ cruciform DNA, conferring on it an open structure. The RuvB hexamer acts as an ATP-dependent pump, pulling dsDNA into and through the RuvAB complex. RuvB forms 2 homohexamers on either side of HJ DNA bound by 1 or 2 RuvA tetramers; 4 subunits per hexamer contact DNA at a time. Coordinated motions by a converter formed by DNA-disengaged RuvB subunits stimulates ATP hydrolysis and nucleotide exchange. Immobilization of the converter enables RuvB to convert the ATP-contained energy into a lever motion, pulling 2 nucleotides of DNA out of the RuvA tetramer per ATP hydrolyzed, thus driving DNA branch migration. The RuvB motors rotate together with the DNA substrate, which together with the progressing nucleotide cycle form the mechanistic basis for DNA recombination by continuous HJ branch migration. Branch migration allows RuvC to scan DNA until it finds its consensus sequence, where it cleaves and resolves cruciform DNA. This is Holliday junction branch migration complex subunit RuvB from Chlorobaculum tepidum (strain ATCC 49652 / DSM 12025 / NBRC 103806 / TLS) (Chlorobium tepidum).